The primary structure comprises 61 residues: Pleurocidin-like peptide WF3 (61 aa).

A signal peptide spans 1 to 22 (MKFTATFLVLSLVVLMAEPGEC). The propeptide occupies 48–61 (YDEQQELNKRAVDE).

Belongs to the pleurocidin family.

The protein localises to the secreted. Its function is as follows. Antimicrobial peptide. This chain is Pleurocidin-like peptide WF3 (ple3), found in Pseudopleuronectes americanus (Winter flounder).